A 182-amino-acid polypeptide reads, in one-letter code: UPF0397 protein BCE_2667 (182 aa).

Helical transmembrane passes span 9-29, 40-60, 71-91, 114-134, and 142-162; these read VVAI…GFSI, AILT…IGLI, WGIW…MGLI, ITGL…DIIV, and IVIQ…VLGL.

This sequence belongs to the UPF0397 family.

The protein resides in the cell membrane. This chain is UPF0397 protein BCE_2667, found in Bacillus cereus (strain ATCC 10987 / NRS 248).